Consider the following 131-residue polypeptide: GATA zinc finger domain-containing protein 2 (131 aa).

Over residues 21-55 (STATDATSADGAASETDAASATDTTSATDPTSATD) the composition is skewed to low complexity. Positions 21 to 85 (STATDATSAD…RGRPYISTPP (65 aa)) are disordered. Residues 57 to 74 (IATTNTTGITSSGPTTNG) show a composition bias toward polar residues. Residues 88–115 (CYDCGRTRSPYWRKGTYNGQVVHLCNAC) form a GATA-type zinc finger.

The chain is GATA zinc finger domain-containing protein 2 (comH) from Dictyostelium discoideum (Social amoeba).